A 531-amino-acid chain; its full sequence is Pescadillo homolog (531 aa).

Positions Ser-309 to Pro-398 constitute a BRCT domain.

It belongs to the pescadillo family.

The protein localises to the nucleus. Its subcellular location is the nucleolus. It localises to the nucleoplasm. Its function is as follows. Required for maturation of ribosomal RNAs and formation of the large ribosomal subunit. The chain is Pescadillo homolog from Caenorhabditis elegans.